A 586-amino-acid polypeptide reads, in one-letter code: Actin-related protein 9 (586 aa).

The interval 141-169 (STPIVDKDADVDPLQRSTPDDTEPNSEEN) is disordered.

Belongs to the actin family. ARP8 subfamily.

This Oryza sativa subsp. indica (Rice) protein is Actin-related protein 9 (ARP9).